Here is a 113-residue protein sequence, read N- to C-terminus: UPF0342 protein SPy_0811/M5005_Spy0626 (113 aa).

This sequence belongs to the UPF0342 family.

The chain is UPF0342 protein SPy_0811/M5005_Spy0626 from Streptococcus pyogenes serotype M1.